A 380-amino-acid chain; its full sequence is Transaldolase (380 aa).

The Schiff-base intermediate with substrate role is filled by Lys141.

Belongs to the transaldolase family. Type 2 subfamily.

It is found in the cytoplasm. The enzyme catalyses D-sedoheptulose 7-phosphate + D-glyceraldehyde 3-phosphate = D-erythrose 4-phosphate + beta-D-fructose 6-phosphate. It participates in carbohydrate degradation; pentose phosphate pathway; D-glyceraldehyde 3-phosphate and beta-D-fructose 6-phosphate from D-ribose 5-phosphate and D-xylulose 5-phosphate (non-oxidative stage): step 2/3. Functionally, transaldolase is important for the balance of metabolites in the pentose-phosphate pathway. The protein is Transaldolase of Trichodesmium erythraeum (strain IMS101).